The chain runs to 776 residues: Genome polyprotein (776 aa).

Residues 1 to 27 form a disordered region; it reads MAGKAVLKGKGGGPPRRASKVAPKKTR. The Cytoplasmic portion of the chain corresponds to 1–98; that stretch reads MAGKAVLKGK…LHRRGSRRTT (98 aa). The span at 17-27 shows a compositional bias: basic residues; the sequence is RASKVAPKKTR. The segment at 33-68 is hydrophobic; homodimerization of capsid protein C; sequence MPNGLVLMRMLGVLWHALTGTARSPVLKAFWKVVPL. The propeptide at 97–117 is ER anchor for the protein C, removed in mature form by serine protease NS3; that stretch reads TTIDWMTPLLITVMLGMCLTA. A helical membrane pass occupies residues 99-117; it reads IDWMTPLLITVMLGMCLTA. Topologically, residues 118-242 are extracellular; it reads TVRRERDGSM…HLTRVEGWVW (125 aa). Residue Asn-144 is glycosylated (N-linked (GlcNAc...) asparagine; by host). Residues 243-260 traverse the membrane as a helical segment; that stretch reads KNKLFTLSLVMVAWLMVD. A topological domain (cytoplasmic) is located at residue Gly-261. A helical membrane pass occupies residues 262–280; it reads LLPRILIVVVALALVPAYA. At 281–727 the chain is on the extracellular side; that stretch reads SRCTHLENRD…HTVLGGAFNT (447 aa). 4 cysteine pairs are disulfide-bonded: Cys-283–Cys-310, Cys-340–Cys-396, Cys-354–Cys-385, and Cys-372–Cys-401. Asn-434 carries N-linked (GlcNAc...) asparagine; by host glycosylation. 2 disulfides stabilise this stretch: Cys-466-Cys-570 and Cys-587-Cys-618. The segment at residues 728–748 is an intramembrane region (helical); that stretch reads LLGGVGFLPKILLGVAMAWLG. At 749–755 the chain is on the extracellular side; it reads LNMRNPT. Residues 756–776 constitute an intramembrane region (helical); the sequence is LSMGFLLSGGLVLAMTLGVGA.

Post-translationally, specific enzymatic cleavages in vivo yield mature proteins Peptide 2K acts as a signal sequence and is removed from the N-terminus of NS4B by the host signal peptidase in the ER lumen. Signal cleavage at the 2K-4B site requires a prior NS3 protease-mediated cleavage at the 4A-2K site.

The protein localises to the virion. It is found in the secreted. It localises to the virion membrane. Its subcellular location is the host endoplasmic reticulum membrane. Functionally, capsid protein C self-assembles to form an icosahedral capsid about 30 nm in diameter. The capsid encapsulates the genomic RNA. PrM acts as a chaperone for envelope protein E during intracellular virion assembly by masking and inactivating envelope protein E fusion peptide. prM is matured in the last step of virion assembly, presumably to avoid catastrophic activation of the viral fusion peptide induced by the acidic pH of the trans-Golgi network. After cleavage by host furin, the pr peptide is released in the extracellular medium and small envelope protein M and envelope protein E homodimers are dissociated. In terms of biological role, envelope protein E binding to host cell surface receptor is followed by virus internalization through clathrin-mediated endocytosis. Envelope protein E is subsequently involved in membrane fusion between virion and host late endosomes. Synthesized as a homodimer with prM which acts as a chaperone for envelope protein E. After cleavage of prM, envelope protein E dissociate from small envelope protein M and homodimerizes. The polypeptide is Genome polyprotein (Homo sapiens (Human)).